The sequence spans 126 residues: 14 kDa phosphohistidine phosphatase (126 aa).

Lysine 22 is a binding site for substrate. The active-site Proton acceptor is histidine 54. 95-97 (SMG) serves as a coordination point for substrate.

This sequence belongs to the janus family. As to quaternary structure, monomer.

It is found in the cytoplasm. The catalysed reaction is N(pros)-phospho-L-histidyl-[protein] + H2O = L-histidyl-[protein] + phosphate. It carries out the reaction N(tele)-phospho-L-histidyl-[protein] + H2O = L-histidyl-[protein] + phosphate. Exhibits phosphohistidine phosphatase activity. The sequence is that of 14 kDa phosphohistidine phosphatase (PHPT1) from Sus scrofa (Pig).